A 149-amino-acid chain; its full sequence is Nucleoside diphosphate kinase (149 aa).

Residues Lys9, Phe57, Arg85, Thr91, Arg102, and Asn112 each coordinate ATP. His115 serves as the catalytic Pros-phosphohistidine intermediate.

It belongs to the NDK family. In terms of assembly, homotetramer. Mg(2+) serves as cofactor.

The protein localises to the cytoplasm. It catalyses the reaction a 2'-deoxyribonucleoside 5'-diphosphate + ATP = a 2'-deoxyribonucleoside 5'-triphosphate + ADP. The enzyme catalyses a ribonucleoside 5'-diphosphate + ATP = a ribonucleoside 5'-triphosphate + ADP. In terms of biological role, major role in the synthesis of nucleoside triphosphates other than ATP. The ATP gamma phosphate is transferred to the NDP beta phosphate via a ping-pong mechanism, using a phosphorylated active-site intermediate. This chain is Nucleoside diphosphate kinase, found in Trichodesmium erythraeum (strain IMS101).